A 920-amino-acid chain; its full sequence is MPSPAGRLHRIRYIRLKKSSPDCRATITSGSADGQRRSPRLTNLLVVAAWVAAAVIANLLLTFTQAEPHDTSPALLPQDAKTAAATSRIAQAFPGTGSNAIAYLVVEGGSTLEPQDQPYYDAAVGALRADTRHVGSVLDWWSDPVTAPLGTSPDGRSATAMVWLRGEAGTTQAAESLDAVRSVLRQLPPSEGLRASIVVPAITNDMPMQITAWQSATIVTVAAVIAVLLLLRARLSVRAAAIVLLTADLSLAVAWPLAAVVRGHDWGTDSVFSWTLAAVLTIGTITAATMLAARLGSDAGHSAAPTYRDSLPAFALPGACVAIFTGPLLLARTPALHGVGTAGLGVFVALAASLTVLPALIALAGASRQLPAPTTGAGWTGRLSLPVSSASALGTAAVLAICMLPIIGMRWGVAENPTRQGGAQVLPGNALPDVVVIKSARDLRDPAALIAINQVSHRLVEVPGVRKVESAAWPAGVPWTDASLSSAAGRLADQLGQQAGSFVPAVTAIKSMKSIIEQMSGAVDQLDSTVNVTLAGARQAQQYLDPMLAAARNLKNKTTELSEYLETIHTWIVGFTNCPDDVLCTAMRKVIEPYDIVVTGMNELSTGADRISAISTQTMSALSSAPRMVAQMRSALAQVRSFVPKLETTIQDAMPQIAQASAMLKNLSADFADTGEGGFHLSRKDLADPSYRHVRESMFSSDGTATRLFLYSDGQLDLAAAARAQQLEIAAGKAMKYGSLVDSQVTVGGAAQIAAAVRDALIHDAVLLAVILLTVVALASMWRGAVHGAAVGVGVLASYLAALGVSIALWQHLLDRELNALVPLVSFAVLASCGVPYLVAGIKAGRIADEATGARSKGAVSGRGAVAPLAALGGVFGAGLVLVSGGSFSVLSQIGTVVVLGLGVLITVQRAWLPTTPGRR.

12 helical membrane passes run 44 to 64 (LLVVAAWVAAAVIANLLLTFT), 210 to 230 (ITAWQSATIVTVAAVIAVLLL), 241 to 261 (AIVLLTADLSLAVAWPLAAVV), 271 to 291 (VFSWTLAAVLTIGTITAATML), 311 to 331 (LPAFALPGACVAIFTGPLLLA), 344 to 364 (LGVFVALAASLTVLPALIALA), 389 to 409 (SASALGTAAVLAICMLPIIGM), 761 to 781 (LIHDAVLLAVILLTVVALASM), 790 to 810 (AVGVGVLASYLAALGVSIALW), 822 to 842 (VPLVSFAVLASCGVPYLVAGI), 864 to 884 (GAVAPLAALGGVFGAGLVLVS), and 888 to 908 (FSVLSQIGTVVVLGLGVLITV).

Belongs to the resistance-nodulation-cell division (RND) (TC 2.A.6) family. MmpL subfamily.

The protein resides in the cell membrane. In Mycobacterium bovis (strain ATCC BAA-935 / AF2122/97), this protein is Probable transport protein MmpL7 (mmpL7).